A 434-amino-acid polypeptide reads, in one-letter code: Glutamate-1-semialdehyde 2,1-aminomutase (434 aa).

The residue at position 266 (K266) is an N6-(pyridoxal phosphate)lysine.

It belongs to the class-III pyridoxal-phosphate-dependent aminotransferase family. HemL subfamily. As to quaternary structure, homodimer. Pyridoxal 5'-phosphate serves as cofactor.

It is found in the cytoplasm. The catalysed reaction is (S)-4-amino-5-oxopentanoate = 5-aminolevulinate. The protein operates within porphyrin-containing compound metabolism; protoporphyrin-IX biosynthesis; 5-aminolevulinate from L-glutamyl-tRNA(Glu): step 2/2. This Psychrobacter sp. (strain PRwf-1) protein is Glutamate-1-semialdehyde 2,1-aminomutase.